Here is a 131-residue protein sequence, read N- to C-terminus: Small ribosomal subunit protein uS8 (131 aa).

It belongs to the universal ribosomal protein uS8 family. In terms of assembly, part of the 30S ribosomal subunit. Contacts proteins S5 and S12.

Functionally, one of the primary rRNA binding proteins, it binds directly to 16S rRNA central domain where it helps coordinate assembly of the platform of the 30S subunit. This chain is Small ribosomal subunit protein uS8, found in Erythrobacter litoralis (strain HTCC2594).